The sequence spans 443 residues: Tol-Pal system protein TolB (443 aa).

An N-terminal signal peptide occupies residues 1-33; that stretch reads MKIGIINTKIRTVFSAFACMIAASLVCTMPARA.

It belongs to the TolB family. As to quaternary structure, the Tol-Pal system is composed of five core proteins: the inner membrane proteins TolA, TolQ and TolR, the periplasmic protein TolB and the outer membrane protein Pal. They form a network linking the inner and outer membranes and the peptidoglycan layer.

The protein resides in the periplasm. Its function is as follows. Part of the Tol-Pal system, which plays a role in outer membrane invagination during cell division and is important for maintaining outer membrane integrity. In Brucella ovis (strain ATCC 25840 / 63/290 / NCTC 10512), this protein is Tol-Pal system protein TolB.